The sequence spans 119 residues: Small ribosomal subunit protein uS10 (119 aa).

Alanine 2 bears the N-acetylalanine mark. Lysine 4 is covalently cross-linked (Glycyl lysine isopeptide (Lys-Gly) (interchain with G-Cter in ubiquitin)). Lysine 8 is subject to N6-succinyllysine; alternate. Residue lysine 8 forms a Glycyl lysine isopeptide (Lys-Gly) (interchain with G-Cter in ubiquitin); alternate linkage. Residue threonine 9 is modified to Phosphothreonine. Residues lysine 34 and lysine 75 each carry the N6-acetyllysine modification. Residue serine 93 is modified to Phosphoserine.

It belongs to the universal ribosomal protein uS10 family. As to quaternary structure, component of the 40S small ribosomal subunit. Polyubiquitinated by ZNF598 via 'Lys-63'-linked ubiquitin chains when a ribosome has stalled, initiating the ribosome quality control (RQC) pathway to degrade the potentially detrimental aberrant nascent polypeptide. Deubiquitinated by OTUD3 and USP21, antagonizing ZNF598 activity. In terms of processing, ufmylated by UFL1.

The protein resides in the cytoplasm. Its function is as follows. Component of the small ribosomal subunit. The ribosome is a large ribonucleoprotein complex responsible for the synthesis of proteins in the cell. The chain is Small ribosomal subunit protein uS10 (RPS20) from Sus scrofa (Pig).